The primary structure comprises 172 residues: NAD(P)H-quinone oxidoreductase subunit I, chloroplastic (172 aa).

2 4Fe-4S ferredoxin-type domains span residues 55 to 84 (GRIH…VDWK) and 95 to 124 (LNYS…MTEE). Positions 64, 67, 70, 74, 104, 107, 110, and 114 each coordinate [4Fe-4S] cluster.

This sequence belongs to the complex I 23 kDa subunit family. As to quaternary structure, NDH is composed of at least 16 different subunits, 5 of which are encoded in the nucleus. [4Fe-4S] cluster serves as cofactor.

Its subcellular location is the plastid. The protein localises to the chloroplast thylakoid membrane. It catalyses the reaction a plastoquinone + NADH + (n+1) H(+)(in) = a plastoquinol + NAD(+) + n H(+)(out). The catalysed reaction is a plastoquinone + NADPH + (n+1) H(+)(in) = a plastoquinol + NADP(+) + n H(+)(out). Functionally, NDH shuttles electrons from NAD(P)H:plastoquinone, via FMN and iron-sulfur (Fe-S) centers, to quinones in the photosynthetic chain and possibly in a chloroplast respiratory chain. The immediate electron acceptor for the enzyme in this species is believed to be plastoquinone. Couples the redox reaction to proton translocation, and thus conserves the redox energy in a proton gradient. The polypeptide is NAD(P)H-quinone oxidoreductase subunit I, chloroplastic (Arabidopsis thaliana (Mouse-ear cress)).